The following is a 449-amino-acid chain: Deoxyguanosinetriphosphate triphosphohydrolase-like protein (449 aa).

The interval 1–27 (MTSSVWQERRHGEDKQRRNDHRSPYQR) is disordered. Basic and acidic residues predominate over residues 7-27 (QERRHGEDKQRRNDHRSPYQR). The 197-residue stretch at 59–255 (RLTHSLEVSQ…MELADDIAYA (197 aa)) folds into the HD domain.

The protein belongs to the dGTPase family. Type 2 subfamily.

This chain is Deoxyguanosinetriphosphate triphosphohydrolase-like protein, found in Shewanella baltica (strain OS185).